A 356-amino-acid polypeptide reads, in one-letter code: Chorismate synthase (356 aa).

NADP(+) is bound by residues arginine 48 and arginine 54. FMN-binding positions include 125–127 (RSS), 237–238 (NA), glycine 281, 296–300 (KPTSS), and arginine 322.

Belongs to the chorismate synthase family. In terms of assembly, homotetramer. Requires FMNH2 as cofactor.

It carries out the reaction 5-O-(1-carboxyvinyl)-3-phosphoshikimate = chorismate + phosphate. It functions in the pathway metabolic intermediate biosynthesis; chorismate biosynthesis; chorismate from D-erythrose 4-phosphate and phosphoenolpyruvate: step 7/7. Its function is as follows. Catalyzes the anti-1,4-elimination of the C-3 phosphate and the C-6 proR hydrogen from 5-enolpyruvylshikimate-3-phosphate (EPSP) to yield chorismate, which is the branch point compound that serves as the starting substrate for the three terminal pathways of aromatic amino acid biosynthesis. This reaction introduces a second double bond into the aromatic ring system. In Novosphingobium aromaticivorans (strain ATCC 700278 / DSM 12444 / CCUG 56034 / CIP 105152 / NBRC 16084 / F199), this protein is Chorismate synthase.